Consider the following 156-residue polypeptide: Ribosomal RNA large subunit methyltransferase H (156 aa).

S-adenosyl-L-methionine-binding positions include Leu73, Gly104, and 123 to 128 (ISSLTL).

Belongs to the RNA methyltransferase RlmH family. As to quaternary structure, homodimer.

Its subcellular location is the cytoplasm. The enzyme catalyses pseudouridine(1915) in 23S rRNA + S-adenosyl-L-methionine = N(3)-methylpseudouridine(1915) in 23S rRNA + S-adenosyl-L-homocysteine + H(+). Specifically methylates the pseudouridine at position 1915 (m3Psi1915) in 23S rRNA. The chain is Ribosomal RNA large subunit methyltransferase H from Herminiimonas arsenicoxydans.